We begin with the raw amino-acid sequence, 404 residues long: MAELKLISAESVTEGHPDKVCDQISDAILDDMLAQDPHSHVAVETCATVGQFFVFGEVTSEGYSDIQNIVRSVVRNIGYTSSRVGLDADSCGVTVSLTEQSPEINQGVARLSGEEESKASREQRYEAQGAGDQGVMFGYACDETDVLMPLPIHLAHRLAYRLAEVRKSGEVPHLRPDGKTQVTIEYDDDDHPVRLDTVLVSTQHDPEVDQAWLKEQLTEHVIRPVLDDVLADRVAHDEYRVLVNPTGSFILGGPAADAGLTGRKIIVDTYGGAAHHGGGAFSGKDPSKVDRSAAYAARWVAKNIVAAGLAHKVEVQVAYAIGVADPVSINVETYGTEIGVTREQIQQAVRKVFDLRPAAIIDELDLKRPIYSKTAAYGHFGREDADFTWEATNKVDELKEAIKA.

H16 is an ATP binding site. D18 serves as a coordination point for Mg(2+). E44 provides a ligand contact to K(+). E57 and Q100 together coordinate L-methionine. A flexible loop region spans residues 100-110; sequence QSPEINQGVAR. ATP contacts are provided by residues 177–179, D257, 263–264, A280, and K284; these read DGK and RK. Residue D257 coordinates L-methionine. K288 lines the L-methionine pocket.

This sequence belongs to the AdoMet synthase family. In terms of assembly, homotetramer; dimer of dimers. The cofactor is Mg(2+). It depends on K(+) as a cofactor.

It localises to the cytoplasm. The enzyme catalyses L-methionine + ATP + H2O = S-adenosyl-L-methionine + phosphate + diphosphate. The protein operates within amino-acid biosynthesis; S-adenosyl-L-methionine biosynthesis; S-adenosyl-L-methionine from L-methionine: step 1/1. Its function is as follows. Catalyzes the formation of S-adenosylmethionine (AdoMet) from methionine and ATP. The overall synthetic reaction is composed of two sequential steps, AdoMet formation and the subsequent tripolyphosphate hydrolysis which occurs prior to release of AdoMet from the enzyme. The sequence is that of S-adenosylmethionine synthase from Bifidobacterium adolescentis (strain ATCC 15703 / DSM 20083 / NCTC 11814 / E194a).